Reading from the N-terminus, the 272-residue chain is Undecaprenyl-diphosphatase (272 aa).

7 helical membrane passes run 6–26, 45–65, 92–112, 115–135, 189–209, 221–241, and 251–271; these read SLLI…LPVS, AKTF…VMFW, THIL…HDVI, LFYP…LLAA, YAAS…ATVL, ADVP…LIAI, and ISFI…YMVF.

It belongs to the UppP family.

Its subcellular location is the cell inner membrane. The catalysed reaction is di-trans,octa-cis-undecaprenyl diphosphate + H2O = di-trans,octa-cis-undecaprenyl phosphate + phosphate + H(+). In terms of biological role, catalyzes the dephosphorylation of undecaprenyl diphosphate (UPP). Confers resistance to bacitracin. This chain is Undecaprenyl-diphosphatase, found in Pectobacterium atrosepticum (strain SCRI 1043 / ATCC BAA-672) (Erwinia carotovora subsp. atroseptica).